The following is a 113-amino-acid chain: N(2)-fixation sustaining protein CowN (113 aa).

Belongs to the CowN family.

Its function is as follows. Is required to sustain N(2)-dependent growth in the presence of low levels of carbon monoxide (CO). Probably acts by protecting the N(2) fixation ability of the nitrogenase complex, which is inactivated in the presence of CO. In Wolinella succinogenes (strain ATCC 29543 / DSM 1740 / CCUG 13145 / JCM 31913 / LMG 7466 / NCTC 11488 / FDC 602W) (Vibrio succinogenes), this protein is N(2)-fixation sustaining protein CowN.